Consider the following 252-residue polypeptide: F-box/SPRY domain-containing protein 1 (252 aa).

One can recognise an F-box domain in the interval 1–48 (MVDPLCNYNVLEAIFSYLELNDLYRCSQVCKSWYHFLNDENSDVWRWH). One can recognise a B30.2/SPRY domain in the interval 58–250 (VKSDLLASVS…VSMVYLGTPL (193 aa)).

This sequence belongs to the FBXO45/Fsn family. In terms of assembly, component of an E3 ubiquitin ligase complex composed of hiw and Fsn.

It is found in the synapse. Its pathway is protein modification; protein ubiquitination. Required in the presynaptic motoneuron to down-regulate the levels of wnd and restrain synaptic terminal growth at the neuromuscular junction (NMJ). The protein is F-box/SPRY domain-containing protein 1 of Drosophila virilis (Fruit fly).